Here is a 65-residue protein sequence, read N- to C-terminus: Neurotoxin BmK-M3 (65 aa).

One can recognise an LCN-type CS-alpha/beta domain in the interval 2–64; sequence RDAYIAKPEN…VPIRVWGKCH (63 aa). Cystine bridges form between cysteine 12–cysteine 63, cysteine 16–cysteine 36, cysteine 22–cysteine 46, and cysteine 26–cysteine 48.

The protein belongs to the long (4 C-C) scorpion toxin superfamily. Sodium channel inhibitor family. Alpha subfamily. As to expression, expressed by the venom gland.

The protein resides in the secreted. Its function is as follows. Binds to sodium channels (Nav) and inhibits the inactivation of the activated channels, thereby blocking neuronal transmission. In Olivierus martensii (Manchurian scorpion), this protein is Neurotoxin BmK-M3.